A 388-amino-acid polypeptide reads, in one-letter code: Succinate--CoA ligase [ADP-forming] subunit beta (388 aa).

Residues 9 to 245 (KELLKSYGLP…KSQENERELK (237 aa)) form the ATP-grasp domain. Residues K46, 53–55 (GRG), E100, Y103, and E108 contribute to the ATP site. Residues N200 and D214 each contribute to the Mg(2+) site. Substrate is bound by residues N265 and 322–324 (GIV).

Belongs to the succinate/malate CoA ligase beta subunit family. Heterotetramer of two alpha and two beta subunits. Requires Mg(2+) as cofactor.

It carries out the reaction succinate + ATP + CoA = succinyl-CoA + ADP + phosphate. The catalysed reaction is GTP + succinate + CoA = succinyl-CoA + GDP + phosphate. It participates in carbohydrate metabolism; tricarboxylic acid cycle; succinate from succinyl-CoA (ligase route): step 1/1. Succinyl-CoA synthetase functions in the citric acid cycle (TCA), coupling the hydrolysis of succinyl-CoA to the synthesis of either ATP or GTP and thus represents the only step of substrate-level phosphorylation in the TCA. The beta subunit provides nucleotide specificity of the enzyme and binds the substrate succinate, while the binding sites for coenzyme A and phosphate are found in the alpha subunit. This is Succinate--CoA ligase [ADP-forming] subunit beta from Psychrobacter arcticus (strain DSM 17307 / VKM B-2377 / 273-4).